A 509-amino-acid polypeptide reads, in one-letter code: Pancreatic secretory granule membrane major glycoprotein GP2 (509 aa).

The first 21 residues, 1–21 (MVGSYVLWLALASCILTLASP), serve as a signal peptide directing secretion. The interval 36–56 (DPCQNYTLLDEPSRSTENTEG) is D10C. 10 disulfides stabilise this stretch: Cys38/Cys132, Cys60/Cys147, Cys82/Cys120, Cys88/Cys152, Cys113/Cys121, Cys162/Cys172, Cys166/Cys181, Cys183/Cys213, Cys201/Cys292, and Cys233/Cys256. 3 N-linked (GlcNAc...) asparagine glycosylation sites follow: Asn40, Asn97, and Asn109. The 45-residue stretch at 158 to 202 (ATDKCKNLCRPEEACSFLNGTWDCFCRSDLNSSDVHSLQPRLNCG) folds into the EGF-like domain. Residues Asn176, Asn188, and Asn232 are each glycosylated (N-linked (GlcNAc...) asparagine). Residues 200-293 (NCGAKEIQVS…TILNINFQCA (94 aa)) form a ZP-N region. Residues 200-456 (NCGAKEIQVS…PCCSRSQQRS (257 aa)) form the ZP domain. N-linked (GlcNAc...) asparagine glycosylation is found at Asn263 and Asn314. Positions 294–317 (YPLDMKVSLQTALHPIVSSLNISV) are flexible ZP-N/ZP-C linker. Residues 318–329 (DGEGEFTVRMAL) form an internal hydrophobic patch (IHP) region. A ZP-C region spans residues 318-456 (DGEGEFTVRM…PCCSRSQQRS (139 aa)). 3 cysteine pairs are disulfide-bonded: Cys373/Cys433, Cys394/Cys449, and Cys438/Cys445. The external hydrophobic patch (EHP) stretch occupies residues 463–471 (PARVLDLGP). The GPI-anchor amidated aspartate moiety is linked to residue Asp484. A propeptide spans 485–509 (GTPSTAGFLLAWPMLLLPILLAELF) (removed in mature form).

As to quaternary structure, interacts with SYCN. Interacts with bacterial adhesin fimH. N-glycosylated. In terms of tissue distribution, expressed in pancreas.

It localises to the zymogen granule membrane. The protein resides in the secreted. It is found in the cell membrane. Its subcellular location is the apical cell membrane. The protein localises to the membrane raft. It localises to the endosome. Functionally, functions as an intestinal M-cell transcytotic receptor specific of type-I-piliated bacteria that participates in the mucosal immune response toward these bacteria. At the apical membrane of M-cells it binds fimH, a protein of the bacteria type I pilus tip. Internalizes bound bacteria, like E.coli and S.typhimurium, from the lumen of the intestine and delivers them, through M-cells, to the underlying organized lymphoid follicles where they are captured by antigen-presenting dendritic cells to elicit a mucosal immune response. This chain is Pancreatic secretory granule membrane major glycoprotein GP2, found in Canis lupus familiaris (Dog).